The sequence spans 314 residues: Target of rapamycin complex subunit wat1 (314 aa).

WD repeat units lie at residues 1-35, 38-76, 81-120, 122-161, 165-204, 213-252, and 257-296; these read MSVQYPPQHSVLLVSSGYDHTIRFWEALSGICSRT, HADSQVNRLCISPDKKFLAAAGNPHVRLYDINTSSQMPL, GHTNNVTAIAFHCDGKWLATSSEDGTVKVWDMRAPSVQRN, DHKSPVNDLLIHPNQGELLSCDQSGRVRAWDLGENSCTHE, EEDVPMSSITVGSDGSMLIAGNNKGNCYVWRMLNHQGASL, AHQRYITRCVLSPDVKHLATCSADATVNIWSTEDMSFMLE, and GHQRWVWDCAFSADSTYLVTASSDHVARLWELSSGETIRQ. A Phosphoserine modification is found at Ser141.

This sequence belongs to the WD repeat LST8 family. The target of rapamycin complex 1 (TORC1) is composed of at least mip1, pop3/wat1, tco89, toc1 and tor2. The target of rapamycin complex 2 (TORC2) is composed of at least bit61, pop3/wat1, sin1, ste20 and tor1. Interacts with prp2.

Its subcellular location is the cytoplasm. It localises to the nucleus. In terms of biological role, component of both TORC1 and TORC2, which regulate multiple cellular processes to control cell growth in response to environmental signals. Nutrient limitation and environmental stress signals cause inactivation of TORC1. Active TORC1 positively controls cell growth and ribosome biogenesis by regulating ribosomal protein gene expression. TORC1 negatively controls G1 cell-cycle arrest, sexual development and amino acid uptake. Represses mating, meiosis and sporulation efficiency by interfering with the functions of the transcription factor ste11 and the meiosis-promoting RNA-binding protein mei2. TORC2 is required for cell survival under various stress conditions. TORC2 positively controls G1 cell-cycle arrest, sexual development and amino acid uptake. Positively regulates amino acid uptake through the control of expression of amino acid permeases. May play a role in mRNA maturation as a coupling protein between splicing and synthesis and/or stabilization. This Schizosaccharomyces pombe (strain 972 / ATCC 24843) (Fission yeast) protein is Target of rapamycin complex subunit wat1.